We begin with the raw amino-acid sequence, 324 residues long: MDAVLLEHFPGGLDTFPSPYFDEEDFFTDQSSRDPLEDSDELLGDEQAEVEFLSHQLHEYCYRDGACLLLQPAPSAAPHALAPPPLGDPGEPEDNVSYCCDAGAPLAAFPYSPGSPPSCLAYPCAAVLSPGARLGGLNGAAAAAAARRRRRVRSEAELQQLRQAANVRERRRMQSINDAFEGLRSHIPTLPYEKRLSKVDTLRLAIGYINFLSELVQADLPLRGSGAGGCGGPGGSRHLGEDSPGNQAQKVIICHRGTRSPSPSDPDYGLPPLAGHSLSWTDEKQLKEQNIIRTAKVWTPEDPRKLNSKSFDNIENEPPFEFVS.

One can recognise a bHLH domain in the interval Gln160–Leu212. Positions Asp302 to Ser324 are disordered.

In terms of assembly, component of the pancreas transcription factor 1 complex (PTF1) which is composed of TCF3/p75, TCF12/p64 and PTF1A/p48. TCF3 is responsible for the nuclear import of the p48/p64 complex. Interacts with TCF3 and RBPSUH/RBP-Jkappa. In terms of tissue distribution, expressed in precursors of pancreatic islets, acini and ducts.

Its subcellular location is the nucleus. The protein localises to the cytoplasm. Its function is as follows. Transcription factor implicated in the cell fate determination in various organs. Binds to the E-box consensus sequence 5'-CANNTG-3'. Plays a role in early and late pancreas development and differentiation. Important for determining whether cells allocated to the pancreatic buds continue towards pancreatic organogenesis or revert back to duodenal fates. May be involved in the maintenance of exocrine pancreas-specific gene expression including ELA1 and amylase. Required for the formation of pancreatic acinar and ductal cells. Plays an important role in cerebellar development. Directly regulated by FOXN4 and RORC during retinal development, FOXN4-PTF1A pathway plays a central role in directing the differentiation of retinal progenitors towards horizontal and amacrine fates. The protein is Pancreas transcription factor 1 subunit alpha (Ptf1a) of Mus musculus (Mouse).